A 208-amino-acid polypeptide reads, in one-letter code: OVARIAN TUMOR DOMAIN-containing deubiquitinating enzyme 2 (208 aa).

Residues 5-127 (IVRRVIPSDN…GLHYDALALS (123 aa)) form the OTU domain. The active site involves Asp-13. Cys-16 serves as the catalytic Nucleophile. Active-site residues include His-120 and His-201.

The protein belongs to the peptidase C85 family.

The enzyme catalyses Thiol-dependent hydrolysis of ester, thioester, amide, peptide and isopeptide bonds formed by the C-terminal Gly of ubiquitin (a 76-residue protein attached to proteins as an intracellular targeting signal).. Functionally, hydrolase that can remove conjugated ubiquitin from proteins in vitro and may therefore play an important regulatory role at the level of protein turnover by preventing degradation. Cysteine protease with a preference for 'Lys-63' and 'Lys-48' -linked ubiquitin (UB) tetramers as substrates. In Arabidopsis thaliana (Mouse-ear cress), this protein is OVARIAN TUMOR DOMAIN-containing deubiquitinating enzyme 2.